A 462-amino-acid chain; its full sequence is Probable Xaa-Pro aminopeptidase NECHADRAFT_60613 (462 aa).

Mn(2+)-binding residues include Asp-259, Asp-270, Glu-393, and Glu-433.

The protein belongs to the peptidase M24B family. It depends on Mn(2+) as a cofactor.

It carries out the reaction Release of any N-terminal amino acid, including proline, that is linked to proline, even from a dipeptide or tripeptide.. Catalyzes the removal of a penultimate prolyl residue from the N-termini of peptides. The polypeptide is Probable Xaa-Pro aminopeptidase NECHADRAFT_60613 (Fusarium vanettenii (strain ATCC MYA-4622 / CBS 123669 / FGSC 9596 / NRRL 45880 / 77-13-4) (Fusarium solani subsp. pisi)).